The primary structure comprises 282 residues: Pantothenate synthetase (282 aa).

Position 30 to 37 (30 to 37 (MGYLHEGH)) interacts with ATP. Residue His37 is the Proton donor of the active site. Gln61 serves as a coordination point for (R)-pantoate. Residue Gln61 participates in beta-alanine binding. An ATP-binding site is contributed by 147–150 (GMKD). Position 153 (Gln153) interacts with (R)-pantoate. ATP contacts are provided by residues Val176 and 184 to 187 (KSSR).

It belongs to the pantothenate synthetase family. As to quaternary structure, homodimer.

Its subcellular location is the cytoplasm. It catalyses the reaction (R)-pantoate + beta-alanine + ATP = (R)-pantothenate + AMP + diphosphate + H(+). Its pathway is cofactor biosynthesis; (R)-pantothenate biosynthesis; (R)-pantothenate from (R)-pantoate and beta-alanine: step 1/1. Functionally, catalyzes the condensation of pantoate with beta-alanine in an ATP-dependent reaction via a pantoyl-adenylate intermediate. The polypeptide is Pantothenate synthetase (Bacillus cereus (strain G9842)).